The following is a 91-amino-acid chain: Small ribosomal subunit protein bS16 (91 aa).

This sequence belongs to the bacterial ribosomal protein bS16 family.

This chain is Small ribosomal subunit protein bS16, found in Limosilactobacillus fermentum (strain NBRC 3956 / LMG 18251) (Lactobacillus fermentum).